We begin with the raw amino-acid sequence, 239 residues long: Acyl-protein thioesterase 1 (239 aa).

Active-site charge relay system residues include S124, D180, and H213.

This sequence belongs to the AB hydrolase superfamily. AB hydrolase 2 family.

The protein localises to the cytoplasm. It is found in the nucleus. The enzyme catalyses S-hexadecanoyl-L-cysteinyl-[protein] + H2O = L-cysteinyl-[protein] + hexadecanoate + H(+). Hydrolyzes fatty acids from S-acylated cysteine residues in proteins with a strong preference for palmitoylated G-alpha proteins over other acyl substrates. Mediates the deacylation of G-alpha proteins such as GPA1 in vivo, but has weak or no activity toward palmitoylated Ras proteins. Has weak lysophospholipase activity in vitro; however such activity may not exist in vivo. The sequence is that of Acyl-protein thioesterase 1 from Emericella nidulans (strain FGSC A4 / ATCC 38163 / CBS 112.46 / NRRL 194 / M139) (Aspergillus nidulans).